We begin with the raw amino-acid sequence, 61 residues long: Large ribosomal subunit protein eL24 (61 aa).

Residues C7, C10, C33, and C37 each coordinate Zn(2+). Residues 7–37 (CSFCGKEIPPATGLMYIRNDGSILWFCSNKC) form a C4-type zinc finger.

The protein belongs to the eukaryotic ribosomal protein eL24 family. Part of the 50S ribosomal subunit. Forms a cluster with proteins L3 and L14. Zn(2+) is required as a cofactor.

Its function is as follows. Binds to the 23S rRNA. This is Large ribosomal subunit protein eL24 from Sulfurisphaera tokodaii (strain DSM 16993 / JCM 10545 / NBRC 100140 / 7) (Sulfolobus tokodaii).